The chain runs to 202 residues: Small ribosomal subunit protein uS4c (202 aa).

In terms of domain architecture, S4 RNA-binding spans 90–152; that stretch reads MRLDNVIFRL…RKSESIINKN (63 aa).

Belongs to the universal ribosomal protein uS4 family. As to quaternary structure, part of the 30S ribosomal subunit. Contacts protein S5. The interaction surface between S4 and S5 is involved in control of translational fidelity.

It localises to the plastid. Its subcellular location is the chloroplast. Its function is as follows. One of the primary rRNA binding proteins, it binds directly to 16S rRNA where it nucleates assembly of the body of the 30S subunit. Functionally, with S5 and S12 plays an important role in translational accuracy. This is Small ribosomal subunit protein uS4c (rps4) from Dendrohypopterygium filiculiforme (Moss).